The chain runs to 87 residues: Large ribosomal subunit protein eL33 (87 aa).

This sequence belongs to the eukaryotic ribosomal protein eL33 family.

The sequence is that of Large ribosomal subunit protein eL33 from Pyrococcus woesei.